We begin with the raw amino-acid sequence, 993 residues long: Ephrin type-B receptor 3 (993 aa).

The signal sequence occupies residues 1 to 29; sequence MAGARPPPGLLPLLAPLLLPLLLPAGCWA. Over 30–554 the chain is Extracellular; the sequence is LEETLMDTKW…AQQLQEQLPL (525 aa). The Eph LBD domain maps to 31-209; that stretch reads EETLMDTKWV…FYKKCASTTA (179 aa). A disulfide bridge connects residues Cys-73 and Cys-191. Fibronectin type-III domains lie at 331 to 446 and 447 to 540; these read VPSP…TNQA and APSE…TTSE. Residues Asn-343 and Asn-440 are each glycosylated (N-linked (GlcNAc...) asparagine). A helical membrane pass occupies residues 555–575; it reads IVGSTVAGFVFMVVVVVIALV. Residues 576-993 lie on the Cytoplasmic side of the membrane; the sequence is CLRKQRHGPD…QMNQTLPVQV (418 aa). Residue Tyr-609 is modified to Phosphotyrosine; by autocatalysis. The region spanning 628-891 is the Protein kinase domain; it reads VKIEEVIGAG…QIVNTLDKLI (264 aa). ATP is bound by residues 634-642 and Lys-660; that span reads IGAGEFGEV. The active-site Proton acceptor is the Asp-753. The SAM domain maps to 920–984; it reads TTFTTVGDWL…LCSIQDMRLQ (65 aa). The PDZ-binding signature appears at 991 to 993; the sequence is VQV.

It belongs to the protein kinase superfamily. Tyr protein kinase family. Ephrin receptor subfamily. Heterotetramer upon binding of the ligand. The heterotetramer is composed of an ephrin dimer and a receptor dimer. Oligomerization is probably required to induce biological responses. In terms of processing, phosphorylated. Autophosphorylates upon ligand-binding. Autophosphorylation on Tyr-609 is required for interaction with SH2 domain-containing proteins. Ubiquitinated by RNF186, mainly through 'Lys-48' and 'Lys-63'-linked polyubiquitin chains. Expressed in cells of the retinal ganglion cell layer during retinal axon guidance to the optic disk. Expressed by Paneth and progenitor cells in the crypts of the intestinal epithelium (at protein level). Expressed in myogenic progenitor cells.

It is found in the cell membrane. The protein resides in the cell projection. It localises to the dendrite. The catalysed reaction is L-tyrosyl-[protein] + ATP = O-phospho-L-tyrosyl-[protein] + ADP + H(+). Functionally, receptor tyrosine kinase which binds promiscuously transmembrane ephrin-B family ligands residing on adjacent cells, leading to contact-dependent bidirectional signaling into neighboring cells. The signaling pathway downstream of the receptor is referred to as forward signaling while the signaling pathway downstream of the ephrin ligand is referred to as reverse signaling. Generally has an overlapping and redundant function with EPHB2. Like EPHB2, functions in axon guidance during development regulating for instance the neurons forming the corpus callosum and the anterior commissure, 2 major interhemispheric connections between the temporal lobes of the cerebral cortex. In addition to its role in axon guidance also plays an important redundant role with other ephrin-B receptors in development and maturation of dendritic spines and the formation of excitatory synapses. Controls other aspects of development through regulation of cell migration and positioning. This includes angiogenesis, palate development and thymic epithelium development for instance. Forward and reverse signaling through the EFNB2/EPHB3 complex also regulate migration and adhesion of cells that tubularize the urethra and septate the cloaca. Finally, plays an important role in intestinal epithelium differentiation segregating progenitor from differentiated cells in the crypt. This chain is Ephrin type-B receptor 3 (Ephb3), found in Mus musculus (Mouse).